The sequence spans 252 residues: Carbohydrate deacetylase (252 aa).

Histidine 59 and histidine 122 together coordinate Mg(2+).

The protein belongs to the YdjC deacetylase family. In terms of assembly, homodimer. Mg(2+) is required as a cofactor.

In terms of biological role, probably catalyzes the deacetylation of acetylated carbohydrates an important step in the degradation of oligosaccharides. The chain is Carbohydrate deacetylase from Vibrio vulnificus (strain YJ016).